A 3685-amino-acid chain; its full sequence is Dystrophin (3685 aa).

An actin-binding region spans residues 1-240 (MLWWEEVEDC…YITSLFQVLP (240 aa)). Calponin-homology (CH) domains are found at residues 15 to 119 (DVQK…LHWQ) and 134 to 240 (TNSE…QVLP). The segment at 63–72 (PKEKGSTRVH) is ANK2- and ANK-3 binding. Spectrin repeat units lie at residues 339-447 (VNLD…NLHR), 448-556 (VLMD…LLQD), 559-667 (LKWQ…QISQ), 719-828 (EIRK…WLEY), 830-934 (NNII…ELQT), 943-1045 (RYQE…KLEE), 1048-1154 (NKLR…ALKG), 1157-1263 (EKTV…TLEE), 1266-1367 (ACWH…LLEQ), 1368-1463 (SIQS…LFQK), 1468-1568 (EQRL…QLEK), 1571-1676 (KLSR…LLLE), 1679-1778 (KHME…KASI), 1779-1874 (PLKE…KALE), 1877-1979 (HQWY…TVRE), 1992-2101 (EISY…RFDR), 2104-2208 (EKWR…RLEE), 2211-2318 (NILS…EIEA), 2319-2423 (QIKD…LRAK), 2475-2577 (FNRA…QLNE), 2580-2686 (KDST…ALEE), 2689-2802 (RLLQ…HLEA), 2808-2930 (KRLH…RKID), and 2935-3040 (RLRE…QLHE). A Phosphothreonine modification is found at N340. Y344 and L348 each carry phosphoserine. E519, S616, and S629 each carry phosphothreonine. Residues 1415 to 1913 (SDLTSHEISL…PEPRDERKIK (499 aa)) are interaction with SYNM. Residues 3055–3088 (TSVQGPWERAISPNKVPYYINHETQTTCWDHPKM) form the WW domain. The interaction with SYNM stretch occupies residues 3058–3408 (QGPWERAISP…TVLEGDNMET (351 aa)). Residues 3308–3364 (KHQAKCNICKECPIIGFRYRSLKHFNYDICQSCFFSGRVAKGHKMHYPMVEYCTPTT) form a ZZ-type; degenerate zinc finger. Zn(2+) contacts are provided by C3313, C3316, C3337, and C3340. Residues 3466 to 3518 (DDEHLLIQHYCQSLNQDSPLSQPRSPAQILISLESEERGELERILADLEEENR) form a binds to SNTB1 region. Phosphoserine occurs at positions 3483, 3490, and 3500. Disordered stretches follow at residues 3528–3554 (KQQH…QSPR) and 3603–3685 (EAKV…EDTM). Polar residues-rich tracts occupy residues 3607–3626 (NGTT…SSQP) and 3662–3673 (QLNNSFPSSRGR). 6 positions are modified to phosphoserine: S3612, S3613, S3617, S3623, S3624, and S3666.

As to quaternary structure, interacts with SYNM. Interacts with the syntrophins SNTA1, SNTB1, SNTB2, SNTG1 and SNTG2. Interacts with KRT19. Component of the dystrophin-associated glycoprotein complex which is composed of three subcomplexes: a cytoplasmic complex comprised of DMD (or UTRN), DTNA and a number of syntrophins, such as SNTB1, SNTB2, SNTG1 and SNTG2, the transmembrane dystroglycan complex, and the sarcoglycan-sarcospan complex. Interacts with DAG1 (betaDAG1) with DMD; the interaction is inhibited by phosphorylation on the PPXY motif of DAG1. Interacts with CMYA5. Directly interacts with ANK2 and ANK3; these interactions do not interfere with betaDAG1-binding and are necessary for proper localization in muscle cells. Identified in a dystroglycan complex that contains at least PRX, DRP2, UTRN, DMD and DAG1. Interacts with DTNB. Interacts with PGM5; the interaction is direct. Interacts with NOS1; localizes NOS1 to sarcolemma in muscle cells. In terms of tissue distribution, expressed in muscle fibers accumulating in the costameres of myoplasm at the sarcolemma. Expressed in brain, muscle, kidney, lung and testis. Most tissues contain transcripts of multiple isoforms. Isoform 15: Only isoform to be detected in heart and liver and is also expressed in brain, testis and hepatoma cells.

It is found in the cell membrane. Its subcellular location is the sarcolemma. The protein resides in the cytoplasm. The protein localises to the cytoskeleton. It localises to the postsynaptic cell membrane. In terms of biological role, anchors the extracellular matrix to the cytoskeleton via F-actin. Ligand for dystroglycan. Component of the dystrophin-associated glycoprotein complex which accumulates at the neuromuscular junction (NMJ) and at a variety of synapses in the peripheral and central nervous systems and has a structural function in stabilizing the sarcolemma. Also implicated in signaling events and synaptic transmission. In Homo sapiens (Human), this protein is Dystrophin.